We begin with the raw amino-acid sequence, 441 residues long: Ribulose bisphosphate carboxylase large chain (441 aa).

At Lys5 the chain carries N6,N6,N6-trimethyllysine. Residues Asn114 and Thr164 each coordinate substrate. Lys166 serves as the catalytic Proton acceptor. Substrate is bound at residue Lys168. Positions 192, 194, and 195 each coordinate Mg(2+). Position 192 is an N6-carboxylysine (Lys192). His285 functions as the Proton acceptor in the catalytic mechanism. Substrate is bound by residues Arg286, His318, and Ser370.

Belongs to the RuBisCO large chain family. Type I subfamily. As to quaternary structure, heterohexadecamer of 8 large chains and 8 small chains; disulfide-linked. The disulfide link is formed within the large subunit homodimers. Mg(2+) is required as a cofactor. The disulfide bond which can form in the large chain dimeric partners within the hexadecamer appears to be associated with oxidative stress and protein turnover.

It localises to the plastid. The protein localises to the chloroplast. It catalyses the reaction 2 (2R)-3-phosphoglycerate + 2 H(+) = D-ribulose 1,5-bisphosphate + CO2 + H2O. It carries out the reaction D-ribulose 1,5-bisphosphate + O2 = 2-phosphoglycolate + (2R)-3-phosphoglycerate + 2 H(+). In terms of biological role, ruBisCO catalyzes two reactions: the carboxylation of D-ribulose 1,5-bisphosphate, the primary event in carbon dioxide fixation, as well as the oxidative fragmentation of the pentose substrate in the photorespiration process. Both reactions occur simultaneously and in competition at the same active site. The protein is Ribulose bisphosphate carboxylase large chain of Drosera dichrosepala (Rusty sundew).